A 248-amino-acid chain; its full sequence is Amphiregulin (248 aa).

A signal peptide spans 1 to 26 (MRTPLLPLARSVLLLLVLGSGHYAAA). Residues 27 to 99 (LELNDPSSGK…IIDDSVRVEQ (73 aa)) constitute a propeptide that is removed on maturation. Disordered stretches follow at residues 29-48 (LNDP…SAGG), 57-77 (VSTI…YDYS), and 100-136 (VIKP…KKKK). Polar residues predominate over residues 58-70 (STISEMPSGSELS). Residues 100–116 (VIKPKKNKTEGEKSTEK) show a composition bias toward basic and acidic residues. A glycan (N-linked (GlcNAc...) asparagine) is linked at N106. The segment covering 117-136 (PKRKKKGGKNGKGRRNKKKK) has biased composition (basic residues). Residues 135 to 175 (KKNPCTAKFQNFCIHGECRYIENLEVVTCNCHQDYFGERCG) form the EGF-like domain. Intrachain disulfides connect C139–C152, C147–C163, and C165–C174. Residues 192 to 215 (IAVVAVTIFVSAIILAAIGIGIVI) traverse the membrane as a helical segment. Residue N241 is glycosylated (N-linked (GlcNAc...) asparagine).

Belongs to the amphiregulin family. The immature precursor interacts with CNIH.

The protein resides in the membrane. Ligand of the EGF receptor/EGFR. Autocrine growth factor as well as a mitogen for a broad range of target cells including astrocytes, Schwann cells and fibroblasts. The chain is Amphiregulin (Areg) from Mus musculus (Mouse).